Here is a 475-residue protein sequence, read N- to C-terminus: FAD-dependent monooxygenase penE (475 aa).

3 residues coordinate FAD: Glu35, Gly49, and Arg108. Tyr216 is a catalytic residue. FAD contacts are provided by Asp308 and Ala321. Residue Asn437 is glycosylated (N-linked (GlcNAc...) asparagine). Residues 446–466 (WGSIWLSPVILCLFCMLFLWP) form a helical membrane-spanning segment.

Belongs to the paxM FAD-dependent monooxygenase family. FAD is required as a cofactor.

Its subcellular location is the membrane. It catalyses the reaction [(1'E)-3'-hydroxy-3',7'-dimethylocta-1',6'-dien-1'-yl]-quinolinone B + NADPH + O2 + H(+) = [(1'E)-5'-(3',3'-dimethyloxiran-2'-yl)-3'-hydroxy-3'-methylpent-1'-en-1'-yl]-quinolinone B + NADP(+) + H2O. Its pathway is secondary metabolite biosynthesis. It functions in the pathway alkaloid biosynthesis. The protein operates within mycotoxin biosynthesis. In terms of biological role, FAD-dependent monooxygenase; part of the gene cluster that mediates the biosynthesis of penigequinolones, potent insecticidal alkaloids that contain a highly modified 10-carbon prenyl group. The first stage is catalyzed by the nonribosomal peptide synthetase penN that condenses anthranilic acid and O-methyl-L-tyrosine to produce 4'-methoxycyclopeptin. 4'-methoxycyclopeptin is then converted to 4'-methoxydehydrocyclopeptin by the ketoglutarate-dependent dioxygenase penM through dehydrogenation to form a double bond between C-alpha and C-beta of the O-methyltyrosine side chain. PenM also converts its first product methoxydehydrocyclopeptin to 4'-methoxycyclopenin. The following conversion of 4'methoxycyclopenin into 4'-methoxyviridicatin is catalyzed by the cyclopenase penL. 4'-methoxyviridicatin is the precursor of quinolone natural products, and is further converted to quinolinone B. The prenyltransferase penI then catalyzes the canonical Friedel-Crafts alkylation of quinolinone B with dimethylallyl cation to yield dimethylallyl quinolone, which is subjected to FAD-dependent dehydrogenation by the FAD-linked oxidoreductase penH to yield conjugated aryl diene. The delta(3') double bond then serves as the site of the second alkylation with DMAPP catalyzed by the prenyltransferase penG to yield a carbenium ion intermediate, which can be attacked by H(2)O to yield a styrenyl quinolone containing a C3'-hydroxyprenyl chain, or undergo cyclization to yield yaequinolones J1 and J2. The conversion of the styrenyl quinolone into the tetrahydrofuran-containing yaequinolone C is performed by the FAD-dependent monooxygenase penE and involves epoxidation of the terminal C7'-C8' olefin, followed by epoxide ring opening initiated by the C3' hydroxyl group. The predicted cysteine hydrolase penJ acts as an epoxide hydrolase that enhances the rate of the 5-exo-tet cyclization step, increasing the yield of yaequinolone C. PenF catalyzes the cationic rearrangement of the epoxide formed by penE (before ring opening to produce yaequinolone C) into yaequinolone D. Finally, the short-chain dehydrogenase/reductase (SDR)-like reductase penD, catalyzes both the dehydration of yaequinolone D and the reduction of the resulting oxonium to yield penigequinolone. In Penicillium thymicola, this protein is FAD-dependent monooxygenase penE.